A 30-amino-acid polypeptide reads, in one-letter code: Bacteriocin plantaricin KL-1Y (30 aa).

It is found in the secreted. Bacteriocin with activity against species of Lactobacillus, Lactococcus, Pediococcus, Leuconostoc and against B.subtilis and, to a lesser extent, against B.coagulans, B.cereus and species of Enterococcus, Listeria, Kocuria, Staphylococcus, Corynebacterium, Salmonella, Pseudomonas and Escherichia. This Lactiplantibacillus plantarum (Lactobacillus plantarum) protein is Bacteriocin plantaricin KL-1Y.